The primary structure comprises 178 residues: Large ribosomal subunit protein uL6 (178 aa).

This sequence belongs to the universal ribosomal protein uL6 family. Part of the 50S ribosomal subunit.

This protein binds to the 23S rRNA, and is important in its secondary structure. It is located near the subunit interface in the base of the L7/L12 stalk, and near the tRNA binding site of the peptidyltransferase center. The polypeptide is Large ribosomal subunit protein uL6 (Listeria monocytogenes serotype 4a (strain HCC23)).